The sequence spans 203 residues: GTP-binding protein YPTC1 (203 aa).

GTP-binding positions include 15-23 (GDSGVGKSC), 33-40 (YTESYIST), 63-67 (DTAGQ), 121-124 (NKSD), and 151-153 (SAK). The Effector region signature appears at 37–45 (YISTIGVDF). The tract at residues 174–203 (ASQPIPTKAGGPVVRPQEGKPINSKSSSCC) is disordered. S-geranylgeranyl cysteine attachment occurs at residues cysteine 202 and cysteine 203.

It belongs to the small GTPase superfamily. Rab family.

It is found in the cell membrane. Functionally, protein transport. Probably involved in vesicular traffic. The protein is GTP-binding protein YPTC1 (YPTC1) of Chlamydomonas reinhardtii (Chlamydomonas smithii).